The primary structure comprises 815 residues: uncharacterized protein (815 aa).

Disordered stretches follow at residues 123 to 183 (QSNT…QPST), 249 to 274 (NVNN…NNTN), 592 to 668 (IKQN…NLNS), and 765 to 815 (NNEE…EEIK). Polar residues-rich tracts occupy residues 135 to 154 (SIIT…TSTT) and 174 to 183 (DSITVLQPST). Over residues 595 to 611 (NGSSSSNNNSKLSSTNS) the composition is skewed to low complexity. Over residues 612–639 (GQTSDNPINSSNGGQSIKKQGSNLSLNR) the composition is skewed to polar residues. Low complexity predominate over residues 640-668 (QQSSTKLNNQSNNNNNNNANTTNQNNLNS). Basic and acidic residues predominate over residues 765–782 (NNEEHNNNNKENNNENNK). The span at 783 to 809 (ENINNNNNIINNNNDNNCNENNNNCNE) shows a compositional bias: low complexity.

This is an uncharacterized protein from Dictyostelium discoideum (Social amoeba).